A 902-amino-acid polypeptide reads, in one-letter code: Transcription factor FPSE_08121 (902 aa).

The tract at residues 1-47 (MVSPDNRPGTQGPSASAHAHDSRVPRKRPGSWDNNPSTAGNRAVKKR) is disordered. The zn(2)-C6 fungal-type DNA-binding region spans 52–81 (CVSCRDRKVRCDVVNGGPPCTNCRLDDVDC). Disordered stretches follow at residues 92 to 189 (NPAR…EAEQ), 208 to 234 (HCEQ…PANP), 258 to 277 (ATEA…SANT), and 820 to 839 (TGVA…PNMT). Low complexity predominate over residues 120-137 (TDADTAAPGPAPGSASAT). Over residues 168–177 (ETICDDDENE) the composition is skewed to acidic residues. 4 stretches are compositionally biased toward polar residues: residues 178 to 187 (NNSWHNQQEA), 220 to 234 (GAAT…PANP), 262 to 277 (PPSS…SANT), and 826 to 839 (GQRS…PNMT).

It localises to the nucleus. In terms of biological role, transcription factor; part of the Fusarium detoxification of benzoxazolinone cluster involved in the degradation of benzoxazolinones produced by the host plant. Maize, wheat, and rye produce the 2 benzoxazinone phytoanticipins 2,4-dihy-droxy-7-methoxy-1,4-benzoxazin-3-one (DIMBOA) and 2,4-dihydroxy-1,4-benzoxazin-3-one (DIBOA) that, due to their inherent instability once released, spontaneously degrade to the more stable corresponding benzoxazolinones, 6-methoxy-2-benzoxazolinone (MBOA) and 2-benzoxazolinone (BOA), respectively. FPSE_08121 positively regulates the expression of the FBD cluster gene FPSE_08120 in response to 2-aminophenol (2-AP) treatment and contributes quantitatively to benzoxazolinone tolerance. The polypeptide is Transcription factor FPSE_08121 (Fusarium pseudograminearum (strain CS3096) (Wheat and barley crown-rot fungus)).